Consider the following 196-residue polypeptide: Imidazoleglycerol-phosphate dehydratase (196 aa).

Belongs to the imidazoleglycerol-phosphate dehydratase family.

It localises to the cytoplasm. It catalyses the reaction D-erythro-1-(imidazol-4-yl)glycerol 3-phosphate = 3-(imidazol-4-yl)-2-oxopropyl phosphate + H2O. Its pathway is amino-acid biosynthesis; L-histidine biosynthesis; L-histidine from 5-phospho-alpha-D-ribose 1-diphosphate: step 6/9. This chain is Imidazoleglycerol-phosphate dehydratase, found in Dehalococcoides mccartyi (strain ATCC BAA-2266 / KCTC 15142 / 195) (Dehalococcoides ethenogenes (strain 195)).